A 568-amino-acid polypeptide reads, in one-letter code: Putative U-box domain-containing protein 55 (568 aa).

Positions 217–464 (QSESDRNDQL…KVAAEKDAAS (248 aa)) form a coiled coil. Positions 496-568 (QPPSYFICPI…AIQEWLQRNS (73 aa)) constitute a U-box domain.

The catalysed reaction is S-ubiquitinyl-[E2 ubiquitin-conjugating enzyme]-L-cysteine + [acceptor protein]-L-lysine = [E2 ubiquitin-conjugating enzyme]-L-cysteine + N(6)-ubiquitinyl-[acceptor protein]-L-lysine.. The protein operates within protein modification; protein ubiquitination. Its function is as follows. Functions as an E3 ubiquitin ligase. The sequence is that of Putative U-box domain-containing protein 55 (PUB55) from Arabidopsis thaliana (Mouse-ear cress).